Consider the following 238-residue polypeptide: Ribosomal RNA small subunit methyltransferase G (238 aa).

Residues G79, F84, 102–104, 130–131, and R149 contribute to the S-adenosyl-L-methionine site; these read EAT and IE.

It belongs to the methyltransferase superfamily. RNA methyltransferase RsmG family.

The protein resides in the cytoplasm. Functionally, specifically methylates the N7 position of a guanine in 16S rRNA. The protein is Ribosomal RNA small subunit methyltransferase G of Chloroflexus aggregans (strain MD-66 / DSM 9485).